Consider the following 140-residue polypeptide: Lymphocyte antigen 6H (140 aa).

The N-terminal stretch at 1-25 (MLPAAMKGLGLALLAVLLCSAPAHG) is a signal peptide. In terms of domain architecture, UPAR/Ly6 spans 26 to 91 (LWCQDCTLTT…RHFFSDYLMG (66 aa)). Cystine bridges form between Cys28–Cys52, Cys31–Cys40, Cys45–Cys73, Cys77–Cys104, and Cys105–Cys110. N-linked (GlcNAc...) asparagine glycosylation occurs at Asn36. Gly115 carries the GPI-anchor amidated glycine lipid modification. A propeptide spans 116 to 140 (AGHSPWALAGGLLLSLGPALLWAGP) (removed in mature form).

As to quaternary structure, interacts with CHRNA4 and CHRNA7. As to expression, highly expressed in brain (cerebral cortex, amygdala, hippocampus and subthalamic nucleus) and in acute human leukemic cell line MOLT-3. Also found in lower levels in testis, pancreas, small intestine and colon.

The protein localises to the cell membrane. Its function is as follows. Believed to act as a modulator of nicotinic acetylcholine receptors (nAChRs) activity. In vitro inhibits alpha-3:beta-4-containing nAChRs maximum response. May play a role in the intracellular trafficking of alpha-7-containing nAChRs and may inhibit their expression at the cell surface. Seems to inhibit alpha-7/CHRNA7 signaling in hippocampal neurons. The polypeptide is Lymphocyte antigen 6H (LY6H) (Homo sapiens (Human)).